A 632-amino-acid chain; its full sequence is MSGGSRIQLLSPRLANQIAAGEVVERPASVAKELLENSLDSGARRIDVEVEQGGVKLLKVRDDGSGISADDLPLALARHATSKIRELEDLEGVMSLGFRGEALASISSVARLTMTSRTASASEAWQVETEGRDMTPRVQPAAHPVGTSVEVRDLFFNTPARRKFLKAEKTEFDHLQEVIRRLALARFDVGFHLRHNGKSILSLHEAHDETARARRVGAICGPGFMEQALPIDVERNGLRLWGWVGLPTFSRSQADLQYFFVNGRAVRDKLVAHAVRQAYRDVLFNGRHPTFVLFLELEPNGVDVNVHPTKHEVRFREGRSVHDFLYGTLHRALADVRPEDQLAAPAAVPELARPTGQQAGEFGPQGEMRLASPVLEQPRAPQQSFSNGGSGAGYQYQYTPRPSQPLPAAEAQAVYREFYKPLDNGAAAATALPESQGDIPPLGYALAQLKGIYILAENAVGLVLVDMHAAHERIMYERLKVAMASEGLSGQPLLVPETLALSQREADCAEEHAQWFQRLGFELQRLGPETLAVRQIPALLKQAEANRLVQDVLADLMEYGTSDRIQAHLNELLGTMACHGAVRANRRLAIPEMNALLRDMENTERSGQCNHGRPTWTQMGLDDLDKLFLRGR.

The protein belongs to the DNA mismatch repair MutL/HexB family.

This protein is involved in the repair of mismatches in DNA. It is required for dam-dependent methyl-directed DNA mismatch repair. May act as a 'molecular matchmaker', a protein that promotes the formation of a stable complex between two or more DNA-binding proteins in an ATP-dependent manner without itself being part of a final effector complex. The protein is DNA mismatch repair protein MutL of Pseudomonas putida (strain GB-1).